Consider the following 216-residue polypeptide: uncharacterized protein (216 aa).

Residues 182-193 (STSNASVNSDDA) are compositionally biased toward polar residues. The interval 182–204 (STSNASVNSDDASTAELGPTSEE) is disordered.

This is an uncharacterized protein from Caenorhabditis elegans.